Here is a 287-residue protein sequence, read N- to C-terminus: Troponin T, cardiac muscle (287 aa).

2 stretches are compositionally biased toward acidic residues: residues 1-31 and 44-59; these read MSDVEETVDEYEEQEEAAVEEHEESVEEEAG and EDGEEEEGREAEDGPV. Disordered stretches follow at residues 1-85 and 124-208; these read MSDV…GERV and KDRI…EKKK. Serine 2 bears the N-acetylserine mark. The residue at position 2 (serine 2) is a Phosphoserine; by CK2. Positions 66–79 are enriched in pro residues; it reads APGPFMPNLVPPKI. Composition is skewed to basic and acidic residues over residues 124 to 173 and 192 to 208; these read KDRI…DEAR and QAERKSGKRQTEREKKK. Serine 197 bears the Phosphoserine; by PKC/PRKCA mark. Threonine 202 is subject to Phosphothreonine; by PKC/PRKCA and RAF1. The residue at position 283 (threonine 283) is a Phosphothreonine; by PKC/PRKCA.

This sequence belongs to the troponin T family. Post-translationally, phosphorylation at Thr-202 by PRKCA induces significant reduction in myofilament calcium sensitivity and actomyosin ATPase activity.

Its function is as follows. Troponin T is the tropomyosin-binding subunit of troponin, the thin filament regulatory complex which confers calcium-sensitivity to striated muscle actomyosin ATPase activity. The protein is Troponin T, cardiac muscle (TNNT2) of Ovis aries (Sheep).